Reading from the N-terminus, the 180-residue chain is uncharacterized protein (180 aa).

This is an uncharacterized protein from Aquifex aeolicus (strain VF5).